The following is a 99-amino-acid chain: Putative membrane protein insertion efficiency factor (99 aa).

This sequence belongs to the UPF0161 family.

Its subcellular location is the cell membrane. Functionally, could be involved in insertion of integral membrane proteins into the membrane. The protein is Putative membrane protein insertion efficiency factor of Levilactobacillus brevis (strain ATCC 367 / BCRC 12310 / CIP 105137 / JCM 1170 / LMG 11437 / NCIMB 947 / NCTC 947) (Lactobacillus brevis).